A 351-amino-acid chain; its full sequence is Anthranilate phosphoribosyltransferase (351 aa).

5-phospho-alpha-D-ribose 1-diphosphate-binding positions include Gly85, 88 to 89 (GD), Ser93, 95 to 98 (NIST), 113 to 121 (KHGNRAASS), and Thr125. Residue Gly85 participates in anthranilate binding. Ser97 is a binding site for Mg(2+). Asn116 is a binding site for anthranilate. Arg171 provides a ligand contact to anthranilate. Mg(2+) is bound by residues Asp229 and Glu230.

This sequence belongs to the anthranilate phosphoribosyltransferase family. Homodimer. It depends on Mg(2+) as a cofactor.

It catalyses the reaction N-(5-phospho-beta-D-ribosyl)anthranilate + diphosphate = 5-phospho-alpha-D-ribose 1-diphosphate + anthranilate. Its pathway is amino-acid biosynthesis; L-tryptophan biosynthesis; L-tryptophan from chorismate: step 2/5. Catalyzes the transfer of the phosphoribosyl group of 5-phosphorylribose-1-pyrophosphate (PRPP) to anthranilate to yield N-(5'-phosphoribosyl)-anthranilate (PRA). This Saccharopolyspora erythraea (strain ATCC 11635 / DSM 40517 / JCM 4748 / NBRC 13426 / NCIMB 8594 / NRRL 2338) protein is Anthranilate phosphoribosyltransferase.